The chain runs to 255 residues: Na(+)-translocating NADH-quinone reductase subunit C (255 aa).

A helical transmembrane segment spans residues 11 to 31; sequence LGVVVGLSLVCSIIVSTAAVG. An FMN phosphoryl threonine modification is found at T223.

This sequence belongs to the NqrC family. Composed of six subunits; NqrA, NqrB, NqrC, NqrD, NqrE and NqrF. The cofactor is FMN.

It is found in the cell inner membrane. It carries out the reaction a ubiquinone + n Na(+)(in) + NADH + H(+) = a ubiquinol + n Na(+)(out) + NAD(+). Its function is as follows. NQR complex catalyzes the reduction of ubiquinone-1 to ubiquinol by two successive reactions, coupled with the transport of Na(+) ions from the cytoplasm to the periplasm. NqrA to NqrE are probably involved in the second step, the conversion of ubisemiquinone to ubiquinol. This chain is Na(+)-translocating NADH-quinone reductase subunit C, found in Vibrio vulnificus (strain CMCP6).